Consider the following 130-residue polypeptide: Small ribosomal subunit protein uS11 (130 aa).

The protein belongs to the universal ribosomal protein uS11 family. As to quaternary structure, part of the 30S ribosomal subunit. Interacts with proteins S7 and S18. Binds to IF-3.

Located on the platform of the 30S subunit, it bridges several disparate RNA helices of the 16S rRNA. Forms part of the Shine-Dalgarno cleft in the 70S ribosome. The chain is Small ribosomal subunit protein uS11 from Pseudoalteromonas atlantica (strain T6c / ATCC BAA-1087).